The primary structure comprises 286 residues: Polyamine aminopropyltransferase (286 aa).

The 235-residue stretch at 1 to 235 folds into the PABS domain; the sequence is MSDYQETLYE…GAMTFAWGAT (235 aa). Gln-30 contacts S-methyl-5'-thioadenosine. Spermidine is bound by residues His-61 and Asp-85. Residues Glu-105 and 137-138 contribute to the S-methyl-5'-thioadenosine site; that span reads DG. Asp-155 functions as the Proton acceptor in the catalytic mechanism. 155–158 serves as a coordination point for spermidine; the sequence is DSTD. S-methyl-5'-thioadenosine is bound at residue Pro-162.

This sequence belongs to the spermidine/spermine synthase family. As to quaternary structure, homodimer or homotetramer.

The protein resides in the cytoplasm. The catalysed reaction is S-adenosyl 3-(methylsulfanyl)propylamine + putrescine = S-methyl-5'-thioadenosine + spermidine + H(+). It functions in the pathway amine and polyamine biosynthesis; spermidine biosynthesis; spermidine from putrescine: step 1/1. In terms of biological role, catalyzes the irreversible transfer of a propylamine group from the amino donor S-adenosylmethioninamine (decarboxy-AdoMet) to putrescine (1,4-diaminobutane) to yield spermidine. The sequence is that of Polyamine aminopropyltransferase from Pseudomonas syringae pv. tomato (strain ATCC BAA-871 / DC3000).